Consider the following 494-residue polypeptide: Alpha-amylase-related protein (494 aa).

A signal peptide spans 1-20; that stretch reads MFKFAAAVILCLVAASSTLA. Q21 is modified (pyrrolidone carboxylic acid). A disulfide bond links C48 and C104. Ca(2+)-binding residues include N118, Q169, and D178. A disulfide bridge connects residues C157 and C171. R206 lines the chloride pocket. The Nucleophile role is filled by D208. H212 serves as a coordination point for Ca(2+). The active-site Proton donor is the E245. Residues N308 and R343 each contribute to the chloride site. 3 disulfides stabilise this stretch: C376–C382, C418–C441, and C448–C460.

Belongs to the glycosyl hydrolase 13 family. As to quaternary structure, monomer. Requires Ca(2+) as cofactor. Chloride serves as cofactor.

It localises to the secreted. The catalysed reaction is Endohydrolysis of (1-&gt;4)-alpha-D-glucosidic linkages in polysaccharides containing three or more (1-&gt;4)-alpha-linked D-glucose units.. This Drosophila atripex (Fruit fly) protein is Alpha-amylase-related protein (Amyrel).